The primary structure comprises 454 residues: Butyrophilin-like protein 2 (454 aa).

Residues 1 to 6 (MVDCPR) are Cytoplasmic-facing. Residues 7-23 (YSLSGVAASFLFVLLTI) form a helical; Signal-anchor for type II membrane protein membrane-spanning segment. At 24-454 (KHPDDFRVVG…KTARFPLSGW (431 aa)) the chain is on the extracellular side. Ig-like V-type domains are found at residues 27–140 (DDFR…VLLQ), 148–234 (PNIH…ATIA), 244–355 (ASVS…ARVD), and 365–452 (PRIT…FPLS). Disulfide bonds link cysteine 50–cysteine 124, cysteine 164–cysteine 218, cysteine 267–cysteine 341, and cysteine 381–cysteine 435. N-linked (GlcNAc...) asparagine glycosylation is found at asparagine 210, asparagine 296, asparagine 427, and asparagine 432.

Belongs to the immunoglobulin superfamily. BTN/MOG family. Highly expressed in intestine and at reduced levels in lung and stomach. Also expressed in thymus, spleen, lymph nodes, T-cells, B-cells, and macrophages.

The protein resides in the membrane. In terms of biological role, negative regulator of T-cell proliferation. The chain is Butyrophilin-like protein 2 from Mus musculus (Mouse).